The chain runs to 1014 residues: Valine--tRNA ligase (1014 aa).

Positions 49-59 (PNVTGSLHMGH) match the 'HIGH' region motif. The 'KMSKS' region motif lies at 542-546 (KMSKS). Lys545 serves as a coordination point for ATP. A coiled-coil region spans residues 947-1014 (VVDIETLRAK…ILRLRLQTLV (68 aa)).

This sequence belongs to the class-I aminoacyl-tRNA synthetase family. ValS type 1 subfamily. In terms of assembly, monomer.

The protein resides in the cytoplasm. The catalysed reaction is tRNA(Val) + L-valine + ATP = L-valyl-tRNA(Val) + AMP + diphosphate. Its function is as follows. Catalyzes the attachment of valine to tRNA(Val). As ValRS can inadvertently accommodate and process structurally similar amino acids such as threonine, to avoid such errors, it has a 'posttransfer' editing activity that hydrolyzes mischarged Thr-tRNA(Val) in a tRNA-dependent manner. This Nostoc sp. (strain PCC 7120 / SAG 25.82 / UTEX 2576) protein is Valine--tRNA ligase.